A 215-amino-acid chain; its full sequence is uncharacterized protein (215 aa).

Active-site charge relay system residues include Ser-114, Asp-162, and His-194.

Belongs to the AB hydrolase superfamily. AB hydrolase 2 family.

This is an uncharacterized protein from Rickettsia felis (strain ATCC VR-1525 / URRWXCal2) (Rickettsia azadi).